Here is a 1038-residue protein sequence, read N- to C-terminus: Activated CDC42 kinase 1 (1038 aa).

Residues 1 to 110 (MQPEEGTGWL…TSPAPGGPAG (110 aa)) are SAM-like domain. The disordered stretch occupies residues 90 to 114 (PPHHSQSTFRKTSPAPGGPAGEGPL). The region spanning 126–385 (LRLLEKLGDG…PTFVALRDFL (260 aa)) is the Protein kinase domain. Residues 132–140 (LGDGSFGVV) and lysine 158 each bind ATP. Aspartate 252 acts as the Proton acceptor in catalysis. Tyrosine 284 is subject to Phosphotyrosine; by SRC and autocatalysis. The SH3 domain maps to 388–448 (AQPTDMRALQ…PRNVVTSVAG (61 aa)). One can recognise a CRIB domain in the interval 454–466 (ISQPLQNSFIHTG). Residues 497-535 (LSVELSTSRPPQHLGGVKKPTYDPVSEDQDPLSSDFKRL) are disordered. Tyrosine 518 is modified (phosphotyrosine). Residues 623-652 (DWDARPLPPPPAYDDVAQDEDDFEICSINS) form a required for interaction with SRC region. The segment at 632 to 635 (PPAY) is required for interaction with NEDD4. Disordered regions lie at residues 659 to 702 (VPAG…SSAQ) and 718 to 840 (LQAP…GPRA). Residue serine 724 is modified to Phosphoserine. The segment at 733–876 (GDDKPQVPPR…SYLERYQRFL (144 aa)) is EBD domain. 3 stretches are compositionally biased toward pro residues: residues 738 to 749 (QVPPRVPIPPRP), 772 to 783 (PASPPRVPPREP), and 794 to 805 (PLVPPGSSPLPP). A Phosphotyrosine modification is found at tyrosine 827. Arginine 839 carries the post-translational modification Omega-N-methylarginine. A phosphotyrosine mark is found at tyrosine 859 and tyrosine 872. Serine 881 bears the Phosphoserine mark. Residues 917–957 (LDPKANFSTNNSNPGARPPPPRATARLPQRGCPGDGPEAGR) form a disordered region. The region spanning 958–996 (PADKIQMAMVHGVTTEECQAALQCHGWSVQRAAQYLKVE) is the UBA domain.

This sequence belongs to the protein kinase superfamily. Tyr protein kinase family. As to quaternary structure, interacts with NEDD4 (via WW3 domain). NEDD4L and EGF promote association with NEDD4. Homodimer. Interacts with AR, CDC42, WWASL and WWOX. Interacts with CSPG4 (activated). Interacts with MERTK (activated); stimulates autophosphorylation. May interact (phosphorylated) with HSP90AB1; maintains kinase activity. Interacts with NPHP1. Interacts with SNX9 (via SH3 domain). Interacts with SRC (via SH2 and SH3 domain). Interacts with EGFR, and this interaction is dependent on EGF stimulation and kinase activity of EGFR. Interacts (via kinase domain) with AKT1. Part of a collagen stimulated complex involved in cell migration composed of CDC42, CRK, TNK2 and BCAR1/p130cas. Interacts with BCAR1/p130cas via SH3 domains. Forms complexes with GRB2 and numerous receptor tyrosine kinases (RTK) including LTK, AXL or PDGFRL, in which GRB2 promotes RTK recruitment by TNK2. The cofactor is Mg(2+). In terms of processing, autophosphorylation regulates kinase activity. Phosphorylation on Tyr-518 is required for interaction with SRC and is observed during association with clathrin-coated pits. Polyubiquitinated by NEDD4 and NEDD4L. Degradation can be induced by EGF and is lysosome-dependent. As to expression, the Tyr-284 phosphorylated form shows a significant increase in expression in breast cancers during the progressive stages i.e. normal to hyperplasia (ADH), ductal carcinoma in situ (DCIS), invasive ductal carcinoma (IDC) and lymph node metastatic (LNMM) stages. It also shows a significant increase in expression in prostate cancers during the progressive stages.

It is found in the cell membrane. The protein localises to the nucleus. It localises to the endosome. The protein resides in the cell junction. Its subcellular location is the adherens junction. It is found in the cytoplasmic vesicle membrane. The protein localises to the cytoplasmic vesicle. It localises to the clathrin-coated vesicle. The protein resides in the membrane. Its subcellular location is the clathrin-coated pit. It is found in the cytoplasm. The protein localises to the perinuclear region. It localises to the cytosol. It catalyses the reaction L-tyrosyl-[protein] + ATP = O-phospho-L-tyrosyl-[protein] + ADP + H(+). It carries out the reaction L-seryl-[protein] + ATP = O-phospho-L-seryl-[protein] + ADP + H(+). The enzyme catalyses L-threonyl-[protein] + ATP = O-phospho-L-threonyl-[protein] + ADP + H(+). Inhibited by AIM-100 (4-amino-5,6-biaryl-furo[2,3-d]pyrimidine), which suppresses activating phosphorylation at Tyr-284. Repressed by dasatinib. Functionally, non-receptor tyrosine-protein and serine/threonine-protein kinase that is implicated in cell spreading and migration, cell survival, cell growth and proliferation. Transduces extracellular signals to cytosolic and nuclear effectors. Phosphorylates AKT1, AR, MCF2, WASL and WWOX. Implicated in trafficking and clathrin-mediated endocytosis through binding to epidermal growth factor receptor (EGFR) and clathrin. Binds to both poly- and mono-ubiquitin and regulates ligand-induced degradation of EGFR, thereby contributing to the accumulation of EGFR at the limiting membrane of early endosomes. Downstream effector of CDC42 which mediates CDC42-dependent cell migration via phosphorylation of BCAR1. May be involved both in adult synaptic function and plasticity and in brain development. Activates AKT1 by phosphorylating it on 'Tyr-176'. Phosphorylates AR on 'Tyr-267' and 'Tyr-363' thereby promoting its recruitment to androgen-responsive enhancers (AREs). Phosphorylates WWOX on 'Tyr-287'. Phosphorylates MCF2, thereby enhancing its activity as a guanine nucleotide exchange factor (GEF) toward Rho family proteins. Contributes to the control of AXL receptor levels. Confers metastatic properties on cancer cells and promotes tumor growth by negatively regulating tumor suppressor such as WWOX and positively regulating pro-survival factors such as AKT1 and AR. Phosphorylates WASP. The polypeptide is Activated CDC42 kinase 1 (TNK2) (Homo sapiens (Human)).